Reading from the N-terminus, the 95-residue chain is Putative membrane protein insertion efficiency factor (95 aa).

Residues 72–95 form a disordered region; sequence FDPVPDAPTSPSPSSSCSCKGPHP. Residues 83–95 are compositionally biased toward low complexity; sequence SPSSSCSCKGPHP.

The protein belongs to the UPF0161 family.

Its subcellular location is the cell inner membrane. Functionally, could be involved in insertion of integral membrane proteins into the membrane. The sequence is that of Putative membrane protein insertion efficiency factor from Xanthomonas axonopodis pv. citri (strain 306).